An 801-amino-acid polypeptide reads, in one-letter code: Triacylglycerol lipase SDP1L (801 aa).

Residue Asn-130 is glycosylated (N-linked (GlcNAc...) asparagine). Helical transmembrane passes span 232 to 249 (ALLLSGGASLGAFHLGVV) and 261 to 277 (IIAGSSVGSVMCAVVGT). Positions 233 to 436 (LLLSGGASLG…EMDLPMIQLK (204 aa)) constitute a PNPLA domain. A GXSXG motif is present at residues 264 to 268 (GSSVG). Ser-266 functions as the Nucleophile in the catalytic mechanism. N-linked (GlcNAc...) asparagine glycans are attached at residues Asn-328 and Asn-332. Asp-423 acts as the Proton acceptor in catalysis. 6 N-linked (GlcNAc...) asparagine glycosylation sites follow: Asn-605, Asn-620, Asn-649, Asn-653, Asn-708, and Asn-759. The segment at 648 to 675 (SNRTSNLSHTYDAGSECDSPEAEDWTRS) is disordered. A disordered region spans residues 750 to 801 (MNSEPEDSQNESEIPETPESVQLDSPEKDIIDGESSASEDGDAQANLIHDHE). A compositionally biased stretch (acidic residues) spans 753–765 (EPEDSQNESEIPE).

As to expression, highly expressed in mature pollen.

The protein resides in the lipid droplet. It localises to the membrane. The enzyme catalyses a triacylglycerol + H2O = a diacylglycerol + a fatty acid + H(+). In terms of biological role, may be involved in the release of fatty acids from the oil body in germinating seedlings. Can hydrolyze triacylglycerols in vitro. This chain is Triacylglycerol lipase SDP1L, found in Arabidopsis thaliana (Mouse-ear cress).